We begin with the raw amino-acid sequence, 327 residues long: Glycerol-3-phosphate dehydrogenase [NAD(P)+] (327 aa).

Tryptophan 15, arginine 35, and lysine 109 together coordinate NADPH. The sn-glycerol 3-phosphate site is built by lysine 109, glycine 137, and serine 139. Alanine 141 contributes to the NADPH binding site. Positions 192, 245, 255, 256, and 257 each coordinate sn-glycerol 3-phosphate. Catalysis depends on lysine 192, which acts as the Proton acceptor. Arginine 256 contributes to the NADPH binding site. Residues leucine 275 and glutamate 277 each contribute to the NADPH site.

Belongs to the NAD-dependent glycerol-3-phosphate dehydrogenase family.

It localises to the cytoplasm. It carries out the reaction sn-glycerol 3-phosphate + NAD(+) = dihydroxyacetone phosphate + NADH + H(+). It catalyses the reaction sn-glycerol 3-phosphate + NADP(+) = dihydroxyacetone phosphate + NADPH + H(+). The protein operates within membrane lipid metabolism; glycerophospholipid metabolism. Functionally, catalyzes the reduction of the glycolytic intermediate dihydroxyacetone phosphate (DHAP) to sn-glycerol 3-phosphate (G3P), the key precursor for phospholipid synthesis. The sequence is that of Glycerol-3-phosphate dehydrogenase [NAD(P)+] from Chelativorans sp. (strain BNC1).